The primary structure comprises 232 residues: MSMPQAILTDIEGTTSSLSFVKEVLFPYARRALPDFVREHREHPDVMPWLDQVANETGTAFSEEALVATLQTWIDTDSKHTALKALQGMIWASGYQNGDFTTHLYPDAVQRLRAWHAANVPLYVYSSGSVPAQQLFFRHSHAGDLSGLFSGWFDTKIGGKRESTSYQRIAQHIGIAPAGIVFLSDVIEELNAAAQIGLNTVLIDRRDDYPTPRHLKDTDRHLHLDSFAQLPF.

Belongs to the HAD-like hydrolase superfamily. MasA/MtnC family. In terms of assembly, monomer. It depends on Mg(2+) as a cofactor.

It carries out the reaction 5-methylsulfanyl-2,3-dioxopentyl phosphate + H2O = 1,2-dihydroxy-5-(methylsulfanyl)pent-1-en-3-one + phosphate. It functions in the pathway amino-acid biosynthesis; L-methionine biosynthesis via salvage pathway; L-methionine from S-methyl-5-thio-alpha-D-ribose 1-phosphate: step 3/6. It participates in amino-acid biosynthesis; L-methionine biosynthesis via salvage pathway; L-methionine from S-methyl-5-thio-alpha-D-ribose 1-phosphate: step 4/6. Its function is as follows. Bifunctional enzyme that catalyzes the enolization of 2,3-diketo-5-methylthiopentyl-1-phosphate (DK-MTP-1-P) into the intermediate 2-hydroxy-3-keto-5-methylthiopentenyl-1-phosphate (HK-MTPenyl-1-P), which is then dephosphorylated to form the acireductone 1,2-dihydroxy-3-keto-5-methylthiopentene (DHK-MTPene). This chain is Enolase-phosphatase E1, found in Xylella fastidiosa (strain M12).